The chain runs to 402 residues: Tyrosine--tRNA ligase (402 aa).

The 'HIGH' region motif lies at Pro-47–His-56. The 'KMSKS' region motif lies at Lys-232–Ser-236. Residue Lys-235 coordinates ATP. One can recognise an S4 RNA-binding domain in the interval Val-341–Ile-401.

It belongs to the class-I aminoacyl-tRNA synthetase family. TyrS type 2 subfamily. Homodimer.

It is found in the cytoplasm. The enzyme catalyses tRNA(Tyr) + L-tyrosine + ATP = L-tyrosyl-tRNA(Tyr) + AMP + diphosphate + H(+). Catalyzes the attachment of tyrosine to tRNA(Tyr) in a two-step reaction: tyrosine is first activated by ATP to form Tyr-AMP and then transferred to the acceptor end of tRNA(Tyr). The chain is Tyrosine--tRNA ligase from Helicobacter pylori (strain ATCC 700392 / 26695) (Campylobacter pylori).